A 103-amino-acid chain; its full sequence is Flagellar hook-basal body complex protein FliE (103 aa).

This sequence belongs to the FliE family.

It localises to the bacterial flagellum basal body. This is Flagellar hook-basal body complex protein FliE from Photorhabdus laumondii subsp. laumondii (strain DSM 15139 / CIP 105565 / TT01) (Photorhabdus luminescens subsp. laumondii).